The primary structure comprises 371 residues: Chaperone protein DnaJ (371 aa).

In terms of domain architecture, J spans 5 to 69; that stretch reads DYYEVLGLSK…QKRAQYDQFG (65 aa). A CR-type zinc finger spans residues 133–215; that stretch reads GKELNVEIPV…CHGSGKVRKR (83 aa). Residues cysteine 146, cysteine 149, cysteine 163, cysteine 166, cysteine 189, cysteine 192, cysteine 203, and cysteine 206 each coordinate Zn(2+). 4 CXXCXGXG motif repeats span residues 146–153, 163–170, 189–196, and 203–210; these read CDTCKGSG, CKHCSGSG, CGHCSGTG, and CTTCHGSG.

This sequence belongs to the DnaJ family. As to quaternary structure, homodimer. Zn(2+) serves as cofactor.

The protein resides in the cytoplasm. Functionally, participates actively in the response to hyperosmotic and heat shock by preventing the aggregation of stress-denatured proteins and by disaggregating proteins, also in an autonomous, DnaK-independent fashion. Unfolded proteins bind initially to DnaJ; upon interaction with the DnaJ-bound protein, DnaK hydrolyzes its bound ATP, resulting in the formation of a stable complex. GrpE releases ADP from DnaK; ATP binding to DnaK triggers the release of the substrate protein, thus completing the reaction cycle. Several rounds of ATP-dependent interactions between DnaJ, DnaK and GrpE are required for fully efficient folding. Also involved, together with DnaK and GrpE, in the DNA replication of plasmids through activation of initiation proteins. The sequence is that of Chaperone protein DnaJ from Bacillus cereus (strain G9842).